We begin with the raw amino-acid sequence, 300 residues long: GTPase Era (300 aa).

Positions 8 to 176 (RCGYVAIVGR…EKVIADHLPE (169 aa)) constitute an Era-type G domain. Residues 16-23 (GRPNVGKS) are G1. 16–23 (GRPNVGKS) provides a ligand contact to GTP. The segment at 42 to 46 (QTTRH) is G2. A G3 region spans residues 63 to 66 (DTPG). GTP is bound by residues 63–67 (DTPGM) and 125–128 (NKTD). Residues 125–128 (NKTD) are G4. The G5 stretch occupies residues 155 to 157 (ISA). The region spanning 199 to 283 (VREKIMRQLG…MLNLWVKVKG (85 aa)) is the KH type-2 domain.

The protein belongs to the TRAFAC class TrmE-Era-EngA-EngB-Septin-like GTPase superfamily. Era GTPase family. Monomer.

Its subcellular location is the cytoplasm. The protein resides in the cell inner membrane. Its function is as follows. An essential GTPase that binds both GDP and GTP, with rapid nucleotide exchange. Plays a role in 16S rRNA processing and 30S ribosomal subunit biogenesis and possibly also in cell cycle regulation and energy metabolism. The sequence is that of GTPase Era from Pseudomonas fluorescens (strain Pf0-1).